The following is a 454-amino-acid chain: Chromosomal replication initiator protein DnaA (454 aa).

Positions 1 to 79 (MSLCLWKQCL…NSPFIKFKVY (79 aa)) are domain I, interacts with DnaA modulators. A domain II region spans residues 79–117 (YQTSKEKKFKKNILQKIQNLNAKPIWDKIPIFKKSSHRS). A domain III, AAA+ region region spans residues 118-334 (NINKKHSFEN…GALNRVIVNA (217 aa)). 4 residues coordinate ATP: G162, G164, K165, and T166. Residues 335-454 (NFTHRSITVE…FSNLIRTLSV (120 aa)) form a domain IV, binds dsDNA region.

This sequence belongs to the DnaA family. As to quaternary structure, oligomerizes as a right-handed, spiral filament on DNA at oriC.

It localises to the cytoplasm. In terms of biological role, plays an essential role in the initiation and regulation of chromosomal replication. ATP-DnaA binds to the origin of replication (oriC) to initiate formation of the DNA replication initiation complex once per cell cycle. Binds the DnaA box (a 9 base pair repeat at the origin) and separates the double-stranded (ds)DNA. Forms a right-handed helical filament on oriC DNA; dsDNA binds to the exterior of the filament while single-stranded (ss)DNA is stabiized in the filament's interior. The ATP-DnaA-oriC complex binds and stabilizes one strand of the AT-rich DNA unwinding element (DUE), permitting loading of DNA polymerase. After initiation quickly degrades to an ADP-DnaA complex that is not apt for DNA replication. Binds acidic phospholipids. The chain is Chromosomal replication initiator protein DnaA from Buchnera aphidicola subsp. Schizaphis graminum (strain Sg).